The following is an 81-amino-acid chain: MADEAIKNGVLDILADLTGSDDVKKNLDLNLFETGLLDSMGTVQLLLELQSQFGVDAPVSEFDRKEWDTPNKIIAKVEQAQ.

The region spanning 1–81 (MADEAIKNGV…KIIAKVEQAQ (81 aa)) is the Carrier domain. Residue S39 is modified to O-(pantetheine 4'-phosphoryl)serine.

This sequence belongs to the DltC family. 4'-phosphopantetheine is transferred from CoA to a specific serine of apo-DCP.

It is found in the cytoplasm. It participates in cell wall biogenesis; lipoteichoic acid biosynthesis. Its function is as follows. Carrier protein involved in the D-alanylation of lipoteichoic acid (LTA). The loading of thioester-linked D-alanine onto DltC is catalyzed by D-alanine--D-alanyl carrier protein ligase DltA. The DltC-carried D-alanyl group is further transferred to cell membrane phosphatidylglycerol (PG) by forming an ester bond, probably catalyzed by DltD. D-alanylation of LTA plays an important role in modulating the properties of the cell wall in Gram-positive bacteria, influencing the net charge of the cell wall. The sequence is that of D-alanyl carrier protein from Lacticaseibacillus rhamnosus (Lactobacillus rhamnosus).